Reading from the N-terminus, the 380-residue chain is Cytochrome b (380 aa).

The next 4 membrane-spanning stretches (helical) occupy residues 33–53 (FGSL…FLAM), 77–98 (WLIR…FLHV), 113–133 (WNMG…GYVL), and 178–198 (FFAF…VHLL). Heme contacts are provided by His-83 and His-97. Heme is bound by residues His-182 and His-196. A ubiquinone is bound at residue His-201. 4 consecutive transmembrane segments (helical) span residues 226–246 (VKDF…TLFF), 288–308 (LGGV…PLLH), 320–340 (ITQT…WIGG), and 347–367 (FIII…IFMP).

This sequence belongs to the cytochrome b family. The cytochrome bc1 complex contains 11 subunits: 3 respiratory subunits (MT-CYB, CYC1 and UQCRFS1), 2 core proteins (UQCRC1 and UQCRC2) and 6 low-molecular weight proteins (UQCRH/QCR6, UQCRB/QCR7, UQCRQ/QCR8, UQCR10/QCR9, UQCR11/QCR10 and a cleavage product of UQCRFS1). This cytochrome bc1 complex then forms a dimer. The cofactor is heme.

The protein localises to the mitochondrion inner membrane. Component of the ubiquinol-cytochrome c reductase complex (complex III or cytochrome b-c1 complex) that is part of the mitochondrial respiratory chain. The b-c1 complex mediates electron transfer from ubiquinol to cytochrome c. Contributes to the generation of a proton gradient across the mitochondrial membrane that is then used for ATP synthesis. This is Cytochrome b (MT-CYB) from Microtus arvalis (Common vole).